The chain runs to 204 residues: Carbon disulfide hydrolase (204 aa).

C35, H88, and C91 together coordinate Zn(2+).

This sequence belongs to the beta-class carbonic anhydrase family. In terms of assembly, forms a hexadecameric catenane homooligomer, through interactions of two interlocked octameric rings. Zn(2+) is required as a cofactor.

It carries out the reaction carbon disulfide + 2 H2O = 2 hydrogen sulfide + CO2 + 2 H(+). The protein operates within sulfur metabolism; hydrogen sulfide biosynthesis. Functionally, catalyzes the conversion of carbon disulfide into hydrogen sulfide and carbon dioxide, with carbonyl sulfide as an intermediate. Likely plays a key role in sulfur metabolism in S.solfataricus. Does not show carbonic anhydrase activity (hydration of CO(2) to carbonate). The polypeptide is Carbon disulfide hydrolase (Saccharolobus solfataricus (strain ATCC 35092 / DSM 1617 / JCM 11322 / P2) (Sulfolobus solfataricus)).